The primary structure comprises 295 residues: Virginiamycin B lyase (295 aa).

Histidine 227 is a binding site for substrate. Glutamate 267 lines the Mg(2+) pocket. Histidine 269 functions as the Proton acceptor in the catalytic mechanism. Glutamate 284 provides a ligand contact to Mg(2+).

This sequence belongs to the Vgb family. As to quaternary structure, monomer. Requires Mg(2+) as cofactor.

Inactivates the type B streptogramin antibiotics by linearizing the lactone ring at the ester linkage, generating a free phenylglycine carboxylate and converting the threonyl moiety into 2-amino-butenoic acid. In Bacillus licheniformis (strain ATCC 14580 / DSM 13 / JCM 2505 / CCUG 7422 / NBRC 12200 / NCIMB 9375 / NCTC 10341 / NRRL NRS-1264 / Gibson 46), this protein is Virginiamycin B lyase.